A 618-amino-acid polypeptide reads, in one-letter code: Proline--tRNA ligase (618 aa).

It belongs to the class-II aminoacyl-tRNA synthetase family. ProS type 1 subfamily. Homodimer.

It is found in the cytoplasm. It catalyses the reaction tRNA(Pro) + L-proline + ATP = L-prolyl-tRNA(Pro) + AMP + diphosphate. Its function is as follows. Catalyzes the attachment of proline to tRNA(Pro) in a two-step reaction: proline is first activated by ATP to form Pro-AMP and then transferred to the acceptor end of tRNA(Pro). As ProRS can inadvertently accommodate and process non-cognate amino acids such as alanine and cysteine, to avoid such errors it has two additional distinct editing activities against alanine. One activity is designated as 'pretransfer' editing and involves the tRNA(Pro)-independent hydrolysis of activated Ala-AMP. The other activity is designated 'posttransfer' editing and involves deacylation of mischarged Ala-tRNA(Pro). The misacylated Cys-tRNA(Pro) is not edited by ProRS. The protein is Proline--tRNA ligase of Streptococcus pyogenes serotype M18 (strain MGAS8232).